A 396-amino-acid chain; its full sequence is Elongation factor Tu (396 aa).

Residues 10–206 (KPHVNIGTIG…AVDAYIPEPE (197 aa)) enclose the tr-type G domain. Positions 19 to 26 (GHVDHGKT) are G1. Position 19–26 (19–26 (GHVDHGKT)) interacts with GTP. T26 is a binding site for Mg(2+). The tract at residues 60–64 (GITIA) is G2. The G3 stretch occupies residues 81–84 (DCPG). GTP is bound by residues 81-85 (DCPGH) and 136-139 (NKAD). Residues 136-139 (NKAD) are G4. A G5 region spans residues 174-176 (SAL).

It belongs to the TRAFAC class translation factor GTPase superfamily. Classic translation factor GTPase family. EF-Tu/EF-1A subfamily. In terms of assembly, monomer.

Its subcellular location is the cytoplasm. The enzyme catalyses GTP + H2O = GDP + phosphate + H(+). Functionally, GTP hydrolase that promotes the GTP-dependent binding of aminoacyl-tRNA to the A-site of ribosomes during protein biosynthesis. The protein is Elongation factor Tu of Geobacter metallireducens (strain ATCC 53774 / DSM 7210 / GS-15).